The primary structure comprises 407 residues: Argininosuccinate synthase (407 aa).

Residues 12-20 (AYSGGLDTS) and A39 contribute to the ATP site. Positions 92 and 97 each coordinate L-citrulline. G122 is an ATP binding site. The L-aspartate site is built by T124, N128, and D129. N128 is a binding site for L-citrulline. Positions 132, 182, 191, 267, and 279 each coordinate L-citrulline.

Belongs to the argininosuccinate synthase family. Type 1 subfamily. As to quaternary structure, homotetramer.

The protein localises to the cytoplasm. The catalysed reaction is L-citrulline + L-aspartate + ATP = 2-(N(omega)-L-arginino)succinate + AMP + diphosphate + H(+). The protein operates within amino-acid biosynthesis; L-arginine biosynthesis; L-arginine from L-ornithine and carbamoyl phosphate: step 2/3. In Campylobacter fetus subsp. fetus (strain 82-40), this protein is Argininosuccinate synthase.